The primary structure comprises 353 residues: B1 bradykinin receptor (353 aa).

Topologically, residues 1 to 41 (MASQTLVVFQASNQSQLPPPNATLCDGAQEAWHLLHKVLPT) are extracellular. N-linked (GlcNAc...) asparagine glycans are attached at residues Asn-13 and Asn-21. The helical transmembrane segment at 42–62 (CVVAICSGGLLGNLFVLSVFL) threads the bilayer. Residues 63-72 (VPRRRLNAAE) are Cytoplasmic-facing. Residues 73 to 93 (IYLAHLAASDLVFALGLPFWA) form a helical membrane-spanning segment. Over 94 to 110 (ETIRNGFHWPFGAPLCR) the chain is Extracellular. Cys-109 and Cys-189 form a disulfide bridge. Residues 111-131 (VVNGVIKANLFISIFLVVAIS) traverse the membrane as a helical segment. Residues 132 to 154 (RDRYRALVHPVASWRRRRRRHWA) lie on the Cytoplasmic side of the membrane. Residues 155 to 175 (QATCVLIWTAGGLLSIPTFLL) form a helical membrane-spanning segment. Over 176-207 (RSVQVVPELNVSACVLPFPHEAWAFVRTVELN) the chain is Extracellular. Residue Asn-185 is glycosylated (N-linked (GlcNAc...) asparagine). The chain crosses the membrane as a helical span at residues 208-228 (VLGFLLPLAAILFFNYHILAA). Residues 229-251 (LRGREQLSRTRCGGPRDGKTTAL) are Cytoplasmic-facing. A helical transmembrane segment spans residues 252 to 272 (ILTLVAVFLLCWTPYHVCAFL). Topologically, residues 273-295 (EFLLHVRAIRGCFWEDFTDLGLQ) are extracellular. A helical membrane pass occupies residues 296-316 (YTNFFAFINSCLNPVIYVFWG). At 317 to 353 (QLFRTKIWELYHRCLPRKLTAVSSSRRKEIFQIFWRN) the chain is on the cytoplasmic side. A lipid anchor (S-palmitoyl cysteine) is attached at Cys-330.

It belongs to the G-protein coupled receptor 1 family. Bradykinin receptor subfamily. BDKRB1 sub-subfamily.

The protein localises to the cell membrane. Its function is as follows. This is a receptor for bradykinin. Could be a factor in chronic pain and inflammation. This chain is B1 bradykinin receptor (BDKRB1), found in Sus scrofa (Pig).